Here is a 290-residue protein sequence, read N- to C-terminus: Type II restriction enzyme MjaIII (290 aa).

The protein belongs to the DpnII type II restriction endonuclease family.

The enzyme catalyses Endonucleolytic cleavage of DNA to give specific double-stranded fragments with terminal 5'-phosphates.. Its function is as follows. A P subtype restriction enzyme that recognizes the double-stranded sequence 5'-GATC-3'; the cleavage site is unknown. This chain is Type II restriction enzyme MjaIII (mjaIIIR), found in Methanocaldococcus jannaschii (strain ATCC 43067 / DSM 2661 / JAL-1 / JCM 10045 / NBRC 100440) (Methanococcus jannaschii).